The chain runs to 190 residues: Jupiter microtubule associated homolog 2 (190 aa).

Residue Met1 is modified to N-acetylmethionine. The segment at 1–190 (MFQVPDSEGG…PGGKSSISFY (190 aa)) is disordered. Phosphoserine is present on Ser30. The residue at position 35 (Thr35) is a Phosphothreonine. A compositionally biased stretch (polar residues) spans 35–44 (TPSSRPNRMA). A phosphoserine mark is found at Ser45, Ser69, and Ser97. The segment covering 110–129 (KPKDHVFLCEGEEPKSDLKA) has biased composition (basic and acidic residues). Residues Ser132 and Ser144 each carry the phosphoserine modification. Positions 139–167 (PGEKGSARKAGPAKEQEPMPTVDSHEPRL) are enriched in basic and acidic residues.

Belongs to the JUPITER family. As to quaternary structure, monomer. Dimer. Interacts with TPCN1. As to expression, expressed in liver, kidney, prostate, testis and uterus.

The protein localises to the cytoplasm. It is found in the nucleus. Nicotinic acid adenine dinucleotide phosphate (NAADP) binding protein required for NAADP-evoked intracellular calcium release. Confers NAADP-sensitivity to the two pore channels (TPCs) complex. Enables NAADP to activate Ca(2+) release from the endoplasmic reticulum through ryanodine receptors. In terms of biological role, (Microbial infection) Involved in the endolysosomal trafficking of human coronavirus SARS-CoV-2. The chain is Jupiter microtubule associated homolog 2 from Homo sapiens (Human).